Reading from the N-terminus, the 236-residue chain is Phosphoribosylformylglycinamidine synthase subunit PurQ (236 aa).

A Glutamine amidotransferase type-1 domain is found at 3 to 234 (FGVIVFPGSN…VDWWERGERL (232 aa)). Cys-86 serves as the catalytic Nucleophile. Catalysis depends on residues His-203 and Glu-205.

As to quaternary structure, part of the FGAM synthase complex composed of 1 PurL, 1 PurQ and 2 PurS subunits.

The protein resides in the cytoplasm. The catalysed reaction is N(2)-formyl-N(1)-(5-phospho-beta-D-ribosyl)glycinamide + L-glutamine + ATP + H2O = 2-formamido-N(1)-(5-O-phospho-beta-D-ribosyl)acetamidine + L-glutamate + ADP + phosphate + H(+). It catalyses the reaction L-glutamine + H2O = L-glutamate + NH4(+). It functions in the pathway purine metabolism; IMP biosynthesis via de novo pathway; 5-amino-1-(5-phospho-D-ribosyl)imidazole from N(2)-formyl-N(1)-(5-phospho-D-ribosyl)glycinamide: step 1/2. Part of the phosphoribosylformylglycinamidine synthase complex involved in the purines biosynthetic pathway. Catalyzes the ATP-dependent conversion of formylglycinamide ribonucleotide (FGAR) and glutamine to yield formylglycinamidine ribonucleotide (FGAM) and glutamate. The FGAM synthase complex is composed of three subunits. PurQ produces an ammonia molecule by converting glutamine to glutamate. PurL transfers the ammonia molecule to FGAR to form FGAM in an ATP-dependent manner. PurS interacts with PurQ and PurL and is thought to assist in the transfer of the ammonia molecule from PurQ to PurL. This Moorella thermoacetica (strain ATCC 39073 / JCM 9320) protein is Phosphoribosylformylglycinamidine synthase subunit PurQ.